The chain runs to 150 residues: uncharacterized protein (150 aa).

Over residues 81-90 (TTKPSCSFAQ) the composition is skewed to polar residues. Residues 81–125 (TTKPSCSFAQPVTPRTREGAGVRGHRRRRRGSLSLIPWKTSNDKQ) are disordered.

This is an uncharacterized protein from Homo sapiens (Human).